Reading from the N-terminus, the 352-residue chain is Histidinol-phosphate aminotransferase (352 aa).

Lys210 bears the N6-(pyridoxal phosphate)lysine mark.

The protein belongs to the class-II pyridoxal-phosphate-dependent aminotransferase family. Histidinol-phosphate aminotransferase subfamily. In terms of assembly, homodimer. Pyridoxal 5'-phosphate is required as a cofactor.

It catalyses the reaction L-histidinol phosphate + 2-oxoglutarate = 3-(imidazol-4-yl)-2-oxopropyl phosphate + L-glutamate. The protein operates within amino-acid biosynthesis; L-histidine biosynthesis; L-histidine from 5-phospho-alpha-D-ribose 1-diphosphate: step 7/9. The sequence is that of Histidinol-phosphate aminotransferase from Clostridium acetobutylicum (strain ATCC 824 / DSM 792 / JCM 1419 / IAM 19013 / LMG 5710 / NBRC 13948 / NRRL B-527 / VKM B-1787 / 2291 / W).